The primary structure comprises 122 residues: Large ribosomal subunit protein bL12 (122 aa).

It belongs to the bacterial ribosomal protein bL12 family. In terms of assembly, homodimer. Part of the ribosomal stalk of the 50S ribosomal subunit. Forms a multimeric L10(L12)X complex, where L10 forms an elongated spine to which 2 to 4 L12 dimers bind in a sequential fashion. Binds GTP-bound translation factors.

Forms part of the ribosomal stalk which helps the ribosome interact with GTP-bound translation factors. Is thus essential for accurate translation. This Xanthomonas oryzae pv. oryzae (strain MAFF 311018) protein is Large ribosomal subunit protein bL12.